The primary structure comprises 679 residues: Methionine--tRNA ligase (679 aa).

Positions 12–22 (PYANGPIHIGH) match the 'HIGH' region motif. Cys143, Cys146, Cys156, and Cys158 together coordinate Zn(2+). Positions 328-332 (KMSKS) match the 'KMSKS' region motif. Lys331 provides a ligand contact to ATP. The tract at residues 537 to 564 (MMEESKDEAAQETGAAATNPFNDSDQPL) is disordered. The tRNA-binding domain maps to 577–679 (DFMKVDLRVA…EGALPGQRVH (103 aa)).

This sequence belongs to the class-I aminoacyl-tRNA synthetase family. MetG type 1 subfamily. In terms of assembly, homodimer. The cofactor is Zn(2+).

Its subcellular location is the cytoplasm. The catalysed reaction is tRNA(Met) + L-methionine + ATP = L-methionyl-tRNA(Met) + AMP + diphosphate. Functionally, is required not only for elongation of protein synthesis but also for the initiation of all mRNA translation through initiator tRNA(fMet) aminoacylation. In Rhodopirellula baltica (strain DSM 10527 / NCIMB 13988 / SH1), this protein is Methionine--tRNA ligase.